Reading from the N-terminus, the 723-residue chain is ABC transporter F family member 4 (723 aa).

The disordered stretch occupies residues 1-117 (MGKKKSDESA…KEQKKREAKE (117 aa)). A compositionally biased stretch (basic and acidic residues) spans 18–31 (SGKDASKDSKKEKL). The segment covering 50–65 (GSSSRTKAAPKSTSYT) has biased composition (polar residues). Acidic residues predominate over residues 72 to 84 (PSDEEDDGESDEE). Residues 95–117 (KSEQRHLEISVTDKEQKKREAKE) show a composition bias toward basic and acidic residues. The ABC transporter 1 domain maps to 163-423 (ITIESFSVSA…EMNKKFDVYD (261 aa)). Residue 195–202 (GPNGMGKS) coordinates ATP. Disordered regions lie at residues 256–275 (LQKS…DDDD) and 427–472 (KAAK…APEA). The span at 266–275 (ENVDGEDDDD) shows a compositional bias: acidic residues. The segment covering 437–446 (QQEKVKDRAK) has biased composition (basic and acidic residues). The 226-residue stretch at 496–721 (LQLIEVSFSY…DLQREIKAEV (226 aa)) folds into the ABC transporter 2 domain. 530 to 537 (GPNGAGKS) is an ATP binding site.

The protein belongs to the ABC transporter superfamily. ABCF family. EF3 (TC 3.A.1.121) subfamily.

This is ABC transporter F family member 4 (ABCF4) from Arabidopsis thaliana (Mouse-ear cress).